The sequence spans 183 residues: Outer membrane protein H.8 (183 aa).

The N-terminal stretch at 1 to 17 (MKAYLALISAAVIGLAA) is a signal peptide. Cys18 carries the N-palmitoyl cysteine lipid modification. Cys18 carries the S-diacylglycerol cysteine lipid modification. A disordered region spans residues 27-51 (AEATPAAEAPASEAPAAEAAPADAA). The region spanning 57–183 (GNCAATVESN…LMNGKVTLVD (127 aa)) is the Plastocyanin-like domain. His102, Cys166, His171, and Met175 together coordinate Cu cation.

Cu cation is required as a cofactor.

The protein localises to the cell outer membrane. The chain is Outer membrane protein H.8 from Neisseria meningitidis serogroup B (strain ATCC BAA-335 / MC58).